We begin with the raw amino-acid sequence, 39 residues long: Potassium channel toxin alpha-KTx 2.8 (39 aa).

Cystine bridges form between Cys-7-Cys-29, Cys-13-Cys-34, and Cys-17-Cys-36.

The protein belongs to the short scorpion toxin superfamily. Potassium channel inhibitor family. Alpha-KTx 02 subfamily. In terms of tissue distribution, expressed by the venom gland.

The protein localises to the secreted. Blocks Kv1.3/KCNA3 voltage-gated potassium channels of human T-lymphocytes (Kd=0.71 nM). This is Potassium channel toxin alpha-KTx 2.8 from Centruroides elegans (Bark scorpion).